Consider the following 146-residue polypeptide: Hemoglobin subunit beta (146 aa).

At Val-1 the chain carries N-acetylvaline. The 145-residue stretch at 2-146 folds into the Globin domain; it reads HLTGEEKTAV…VANALAHKYH (145 aa). Thr-12 carries the phosphothreonine modification. A Phosphoserine modification is found at Ser-44. Lys-59 carries the N6-acetyllysine modification. His-63 provides a ligand contact to heme b. The residue at position 82 (Lys-82) is an N6-acetyllysine. His-92 contributes to the heme b binding site. Cys-93 is modified (S-nitrosocysteine). Lys-144 carries the N6-acetyllysine modification.

The protein belongs to the globin family. Heterotetramer of two alpha chains and two beta chains. Red blood cells.

Involved in oxygen transport from the lung to the various peripheral tissues. This is Hemoglobin subunit beta (HBB) from Nasua nasua (Ring-tailed coati).